Consider the following 291-residue polypeptide: Pyridoxal 5'-phosphate synthase subunit PdxS (291 aa).

Asp23 contributes to the D-ribose 5-phosphate binding site. The active-site Schiff-base intermediate with D-ribose 5-phosphate is Lys80. Gly152 is a D-ribose 5-phosphate binding site. D-glyceraldehyde 3-phosphate is bound at residue Arg164. D-ribose 5-phosphate contacts are provided by residues Gly213 and 234–235 (GS).

It belongs to the PdxS/SNZ family. In terms of assembly, in the presence of PdxT, forms a dodecamer of heterodimers.

It carries out the reaction aldehydo-D-ribose 5-phosphate + D-glyceraldehyde 3-phosphate + L-glutamine = pyridoxal 5'-phosphate + L-glutamate + phosphate + 3 H2O + H(+). Its pathway is cofactor biosynthesis; pyridoxal 5'-phosphate biosynthesis. In terms of biological role, catalyzes the formation of pyridoxal 5'-phosphate from ribose 5-phosphate (RBP), glyceraldehyde 3-phosphate (G3P) and ammonia. The ammonia is provided by the PdxT subunit. Can also use ribulose 5-phosphate and dihydroxyacetone phosphate as substrates, resulting from enzyme-catalyzed isomerization of RBP and G3P, respectively. This chain is Pyridoxal 5'-phosphate synthase subunit PdxS, found in Haemophilus influenzae (strain PittGG).